A 646-amino-acid chain; its full sequence is UvrABC system protein B (646 aa).

Residues 25 to 412 (NGIKAGMREQ…QNIVEQIIRP (388 aa)) enclose the Helicase ATP-binding domain. 38–45 (GVTGSGKT) is a binding site for ATP. The short motif at 91–114 (YYDFYQPEAYIPQTDTYIDKEASI) is the Beta-hairpin element. Positions 428–594 (QVDDLLSEIR…STRRTLREEE (167 aa)) constitute a Helicase C-terminal domain. The UVR domain maps to 611 to 646 (ELIIKDLEAEMRDAARNLEFERAARIRDRIMSLKSN).

This sequence belongs to the UvrB family. Forms a heterotetramer with UvrA during the search for lesions. Interacts with UvrC in an incision complex.

It is found in the cytoplasm. Functionally, the UvrABC repair system catalyzes the recognition and processing of DNA lesions. A damage recognition complex composed of 2 UvrA and 2 UvrB subunits scans DNA for abnormalities. Upon binding of the UvrA(2)B(2) complex to a putative damaged site, the DNA wraps around one UvrB monomer. DNA wrap is dependent on ATP binding by UvrB and probably causes local melting of the DNA helix, facilitating insertion of UvrB beta-hairpin between the DNA strands. Then UvrB probes one DNA strand for the presence of a lesion. If a lesion is found the UvrA subunits dissociate and the UvrB-DNA preincision complex is formed. This complex is subsequently bound by UvrC and the second UvrB is released. If no lesion is found, the DNA wraps around the other UvrB subunit that will check the other stand for damage. This chain is UvrABC system protein B, found in Methanothermobacter thermautotrophicus (strain ATCC 29096 / DSM 1053 / JCM 10044 / NBRC 100330 / Delta H) (Methanobacterium thermoautotrophicum).